Consider the following 44-residue polypeptide: Relaxin (44 aa).

Position 1 is a pyrrolidone carboxylic acid (Gln1). Disulfide bonds link Cys3-Cys31, Cys15-Cys44, and Cys30-Cys35.

The protein belongs to the insulin family. As to quaternary structure, heterodimer of a B chain and an A chain linked by two disulfide bonds.

Its subcellular location is the secreted. The chain is Relaxin from Carcharias taurus (Sand tiger shark).